A 233-amino-acid polypeptide reads, in one-letter code: Small ribosomal subunit protein uS3 (233 aa).

Residues valine 39 to arginine 107 enclose the KH type-2 domain.

It belongs to the universal ribosomal protein uS3 family. Part of the 30S ribosomal subunit. Forms a tight complex with proteins S10 and S14.

Functionally, binds the lower part of the 30S subunit head. Binds mRNA in the 70S ribosome, positioning it for translation. This Photorhabdus laumondii subsp. laumondii (strain DSM 15139 / CIP 105565 / TT01) (Photorhabdus luminescens subsp. laumondii) protein is Small ribosomal subunit protein uS3.